The following is a 415-amino-acid chain: Protein CDC73 homolog (415 aa).

This sequence belongs to the CDC73 family. Component of the nuclear PAF1 complex (PAF1C), which consists of VIP2/ELF7/PAF1, VIP3/SKI8/WDR61, VIP4/LEO1, VIP5/RTF1, VIP6/ELF8/CTR9 and CDC73. Expressed in root tips, shoot apex, young leaves and flowers, especially in stamen filaments and carpels.

The protein resides in the nucleus. In terms of biological role, component of the PAF1 complex (PAF1C) which is involved in histone modifications such as methylation on histone H3 'Lys-4' (H3K4me3). Involved in regulation of flowering time. Required for the expression of the flowering repressors FLC and MADS-box genes of the MAF family. Required for histone H3 trimethylation on 'Lys-4' (H3K4me3) at the FLC locus. Prevents trimethylation on 'Lys-27' (H3K27me3) at the same locus. This is Protein CDC73 homolog from Arabidopsis thaliana (Mouse-ear cress).